We begin with the raw amino-acid sequence, 119 residues long: Large ribosomal subunit protein bL19 (119 aa).

This sequence belongs to the bacterial ribosomal protein bL19 family.

In terms of biological role, this protein is located at the 30S-50S ribosomal subunit interface and may play a role in the structure and function of the aminoacyl-tRNA binding site. The chain is Large ribosomal subunit protein bL19 from Psychromonas ingrahamii (strain DSM 17664 / CCUG 51855 / 37).